Reading from the N-terminus, the 1247-residue chain is MEDAGAAGPGPEPEPEPEPEPEPAPEPEPEPKPGAGTSEAFSRLWTDVMGILDGSLGNIDDLAQQYADYYNTCFSDVCERMEELRKRRVSQDLEVEKPDASPTSLQLRSQIEESLGFCSAVSTPEVERKNPLHKSNSEDSSVGKGDWKKKNKYFWQNFRKNQKGIMRQTSKGEDVGYVASEITMSDEERIQLMMMVKEKMITIEEALARLKEYEAQHRQSAALDPADWPDGSYPTFDGSSNCNSREQSDDETEESVKFKRLHKLVNSTRRVRKKLIRVEEMKKPSTEGGEEHVFENSPVLDERSALYSGVHKKPLFFDGSPEKPPEDDSDSLTTSPSSSSLDTWGAGRKLVKTFSKGESRGLIKPPKKMGTFFSYPEEEKAQKVSRSLTEGEMKKGLGSLSHGRTCSFGGFDLTNRSLHVGSNNSDPMGKEGDFVYKEVIKSPTASRISLGKKVKSVKETMRKRMSKKYSSSVSEQDSGLDGMPGSPPPSQPDPEHLDKPKLKAGGSVESLRSSLSGQSSMSGQTVSTTDSSTSNRESVKSEDGDDEEPPYRGPFCGRARVHTDFTPSPYDTDSLKLKKGDIIDIISKPPMGTWMGLLNNKVGTFKFIYVDVLSEDEEKPKRPTRRRRKGRPPQPKSVEDLLDRINLKEHMPTFLFNGYEDLDTFKLLEEEDLDELNIRDPEHRAVLLTAVELLQEYDSNSDQSGSQEKLLVDSQGLSGCSPRDSGCYESSENLENGKTRKASLLSAKSSTEPSLKSFSRNQLGNYPTLPLMKSGDALKQGQEEGRLGGGLAPDTSKSCDPPGVTGLNKNRRSLPVSICRSCETLEGPQTVDTWPRSHSLDDLQVEPGAEQDVPTEVTEPPPQIVPEVPQKTTASSTKAQPLEQDSAVDNALLLTQSKRFSEPQKLTTKKLEGSIAASGRGLSPPQCLPRNYDAQPPGAKHGLARTPLEGHRKGHEFEGTHHPLGTKEGVDAEQRMQPKIPSQPPPVPAKKSRERLANGLHPVPMGPSGALPSPDAPCLPVKRGSPASPTSPSDCPPALAPRPLSGQAPGSPPSTRPPPWLSELPENTSLQEHGVKLGPALTRKVSCARGVDLETLTENKLHAEGIDLTEEPYSDKHGRCGIPEALVQRYAEDLDQPERDVAANMDQIRVKQLRKQHRMAIPSGGLTEICRKPVSPGCISSVSDWLISIGLPMYAGTLSTAGFSTLSQVPSLSHTCLQEAGITEERHIRKLLSAARLFKLPPGPEAM.

The disordered stretch occupies residues 1–39 (MEDAGAAGPGPEPEPEPEPEPEPAPEPEPEPKPGAGTSE). A compositionally biased stretch (acidic residues) spans 13–28 (PEPEPEPEPEPAPEPE). Serine 90 carries the phosphoserine modification. 3 disordered regions span residues 126–145 (VERK…VGKG), 221–257 (AALD…ESVK), and 316–344 (FFDG…LDTW). The residue at position 248 (serine 248) is a Phosphoserine. The segment covering 331 to 343 (SLTTSPSSSSLDT) has biased composition (low complexity). Residue serine 407 is modified to Phosphoserine. A disordered region spans residues 449-573 (SLGKKVKSVK…DFTPSPYDTD (125 aa)). Composition is skewed to low complexity over residues 468–484 (KYSS…DGMP) and 505–523 (GGSV…SMSG). Polar residues predominate over residues 524-536 (QTVSTTDSSTSNR). An SH3 domain is found at 554–615 (PFCGRARVHT…KFIYVDVLSE (62 aa)). Serine 614 is subject to Phosphoserine. Disordered stretches follow at residues 616–639 (DEEK…KSVE) and 713–810 (DSQG…LNKN). A compositionally biased stretch (basic residues) spans 622 to 631 (RPTRRRRKGR). The region spanning 633–697 (PQPKSVEDLL…LTAVELLQEY (65 aa)) is the SAM 1 domain. The span at 746–765 (SAKSSTEPSLKSFSRNQLGN) shows a compositional bias: polar residues. 2 positions are modified to phosphoserine: serine 821 and serine 839. Disordered stretches follow at residues 846–884 (EPGA…PLEQ), 903–946 (PQKL…LART), and 971–1065 (DAEQ…SELP). The interval 852–860 (DVPTEVTEP) is required for interaction with TRAF6. Position 858 is a phosphothreonine (threonine 858). A compositionally biased stretch (pro residues) spans 1050–1060 (GSPPSTRPPPW). The region spanning 1177-1241 (GCISSVSDWL…LSAARLFKLP (65 aa)) is the SAM 2 domain.

Interacts with GNAS. Interacts with IQGAP1. Interacts with TRAF6 (via C-terminus); the interaction is LPS-dependent. Interacts with MAP3K7, CHUK and IKBKB. Expressed ubiquitously, with highest levels in lung, placenta, spleen and thymus. Down-regulated in the majority (74%) of breast tumors in comparison with corresponding normal breast epithelial tissues. Expressed in the epidermis, epidermal keratinocytes, dermal fibroblasts and melanocytes.

The protein resides in the cytoplasm. In terms of biological role, is a positive regulator of NF-kappa-B signaling downstream of TLR4 activation. It acts as a scaffold molecule to assemble a molecular complex that includes TRAF6, MAP3K7, CHUK and IKBKB, thereby facilitating NF-kappa-B signaling activation. Regulates TRAF6 and MAP3K7 ubiquitination. Involved in the regulation of cell mobility. Regulates lipolysaccharide (LPS)-induced endothelial cell migration. Is involved in the regulation of skin pigmentation through the control of melanocyte migration in the epidermis. The chain is SAM and SH3 domain-containing protein 1 (SASH1) from Homo sapiens (Human).